We begin with the raw amino-acid sequence, 326 residues long: MEKDSLSRADQQYECVAEIGEGAYGKVFKARDLKNGGRFVALKRVRVQTSEEGMPLSTIREVAVLRHLETFEHPNVVRLFDVCTVSRTDRETKLTLVFEHVDQDLTTYLDKVPEPGVPTETIKDMMFQLLRGLDFLHSHRVVHRDLKPQNILVTSSGQIKLADFGLARIYSFQMALTSVVVTLWYRAPEVLLQSSYATPVDLWSVGCIFAEMFRRKPLFRGSSDVDQLGKILDIIGLPGEEDWPRDVALPRQAFHSKSAQPIEKFVTDIDELGKDLLLKCLTFNPAKRISAYGALNHPYFQDLERYKDNLNSHLPSNQSTSELNTA.

Position 1 is an N-acetylmethionine (M1). Y13 and Y24 each carry phosphotyrosine. A Protein kinase domain is found at 13–300; that stretch reads YECVAEIGEG…AYGALNHPYF (288 aa). ATP contacts are provided by residues 19–27 and K43; that span reads IGEGAYGKV. A phosphothreonine mark is found at T49 and T70. Residue D145 is the Proton acceptor of the active site. At T177 the chain carries Phosphothreonine. N6-acetyllysine is present on K264. Residue S319 is modified to Phosphoserine. T325 carries the phosphothreonine modification.

The protein belongs to the protein kinase superfamily. CMGC Ser/Thr protein kinase family. CDC2/CDKX subfamily. Interaction with D-type G1 cyclins. Cyclin binding promotes enzyme activation by phosphorylation at Thr-177. Binds to RUNX1, CDKN2D, FBXO7 and CDKN2C/p18-INK4c. Forms a cytoplasmic complex with Hsp90/HSP90AB1 and CDC37. FBXO7-binding promotes D-type cyclin binding. Post-translationally, thr-177 phosphorylation and Tyr-24 dephosphorylation promotes kinase activity. Expressed in subgranular zone (SGZ) of the hippocampal dentate gyrus (DG) and the subventricular zone (SVZ) of the lateral ventricles whose neural precursor cells (NPC) give rise to dentate granule neurons and olfactory bulb (OB) interneurons, respectively. Expressed in the neuroepithelium of the cerebral cortex of the developing brain.

The protein localises to the cytoplasm. It localises to the nucleus. It is found in the cell projection. Its subcellular location is the ruffle. The protein resides in the cytoskeleton. The protein localises to the microtubule organizing center. It localises to the centrosome. It carries out the reaction L-seryl-[protein] + ATP = O-phospho-L-seryl-[protein] + ADP + H(+). The catalysed reaction is L-threonyl-[protein] + ATP = O-phospho-L-threonyl-[protein] + ADP + H(+). Activated by Thr-177 phosphorylation and Tyr-24 dephosphorylation. Rapidly down-regulated prior to cell differentiation (e.g. erythroid and osteoblast). Serine/threonine-protein kinase involved in the control of the cell cycle and differentiation; promotes G1/S transition. Phosphorylates pRB/RB1 and NPM1. Interacts with D-type G1 cyclins during interphase at G1 to form a pRB/RB1 kinase and controls the entrance into the cell cycle. Involved in initiation and maintenance of cell cycle exit during cell differentiation; prevents cell proliferation and negatively regulates cell differentiation, but is required for the proliferation of specific cell types (e.g. erythroid and hematopoietic cells). Essential for cell proliferation within the dentate gyrus of the hippocampus and the subventricular zone of the lateral ventricles. Required during thymocyte development. Promotes the production of newborn neurons, probably by modulating G1 length. Promotes, at least in astrocytes, changes in patterns of gene expression, changes in the actin cytoskeleton including loss of stress fibers, and enhanced motility during cell differentiation. Prevents myeloid differentiation by interfering with RUNX1 and reducing its transcription transactivation activity, but promotes proliferation of normal myeloid progenitors. Delays senescence. Promotes the proliferation of beta-cells in pancreatic islets of Langerhans. May play a role in the centrosome organization during the cell cycle phases. In Mus musculus (Mouse), this protein is Cyclin-dependent kinase 6 (Cdk6).